A 459-amino-acid chain; its full sequence is Exodeoxyribonuclease 7 large subunit (459 aa).

It belongs to the XseA family. As to quaternary structure, heterooligomer composed of large and small subunits.

The protein localises to the cytoplasm. It catalyses the reaction Exonucleolytic cleavage in either 5'- to 3'- or 3'- to 5'-direction to yield nucleoside 5'-phosphates.. In terms of biological role, bidirectionally degrades single-stranded DNA into large acid-insoluble oligonucleotides, which are then degraded further into small acid-soluble oligonucleotides. The chain is Exodeoxyribonuclease 7 large subunit from Pseudomonas fluorescens (strain Pf0-1).